Consider the following 385-residue polypeptide: uncharacterized protein (385 aa).

It belongs to the peptidase M20 family.

This is an uncharacterized protein from Staphylococcus saprophyticus subsp. saprophyticus (strain ATCC 15305 / DSM 20229 / NCIMB 8711 / NCTC 7292 / S-41).